The primary structure comprises 257 residues: NH(3)-dependent NAD(+) synthetase (257 aa).

28-35 (GISGGVDS) lines the ATP pocket. Asp-34 is a Mg(2+) binding site. A deamido-NAD(+)-binding site is contributed by Arg-109. Thr-129 is a binding site for ATP. Mg(2+) is bound at residue Glu-134. Positions 142 and 149 each coordinate deamido-NAD(+). Residues Lys-158 and Ser-180 each contribute to the ATP site. 240 to 241 (HK) is a deamido-NAD(+) binding site.

This sequence belongs to the NAD synthetase family. In terms of assembly, homodimer.

The catalysed reaction is deamido-NAD(+) + NH4(+) + ATP = AMP + diphosphate + NAD(+) + H(+). It participates in cofactor biosynthesis; NAD(+) biosynthesis; NAD(+) from deamido-NAD(+) (ammonia route): step 1/1. In terms of biological role, catalyzes the ATP-dependent amidation of deamido-NAD to form NAD. Uses ammonia as a nitrogen source. This is NH(3)-dependent NAD(+) synthetase from Pyrococcus furiosus (strain ATCC 43587 / DSM 3638 / JCM 8422 / Vc1).